Consider the following 115-residue polypeptide: Probable non-functional T cell receptor beta variable 7-1 (115 aa).

The N-terminal stretch at 1 to 21 (MGTRLLCWAAICLLGADHTGA) is a signal peptide. The Ig-like domain occupies 22 to 115 (GVSQSLRHKV…LAVYLCASSS (94 aa)).

Most probably, the alpha-beta TR is not assembled due to incorrect folding of the beta chain. Alpha-beta TR is a heterodimer composed of an alpha and beta chain; disulfide-linked. The alpha-beta TR is associated with the transmembrane signaling CD3 coreceptor proteins to form the TR-CD3 (TcR or TCR). The assembly of alpha-beta TR heterodimers with CD3 occurs in the endoplasmic reticulum where a single alpha-beta TR heterodimer associates with one CD3D-CD3E heterodimer, one CD3G-CD3E heterodimer and one CD247 homodimer forming a stable octameric structure. CD3D-CD3E and CD3G-CD3E heterodimers preferentially associate with TR alpha and TR beta chains, respectively. The association of the CD247 homodimer is the last step of TcR assembly in the endoplasmic reticulum and is required for transport to the cell surface.

The protein resides in the cell membrane. Probable non-functional open reading frame (ORF) of V region of the variable domain of T cell receptor (TR) beta chain. Non-functional ORF generally cannot participate in the synthesis of a productive T cell receptor (TR) chain due to altered V-(D)-J or switch recombination and/or splicing site (at mRNA level) and/or conserved amino acid change (protein level). Alpha-beta T cell receptors are antigen specific receptors which are essential to the immune response and are present on the cell surface of T lymphocytes. Recognize peptide-major histocompatibility (MH) (pMH) complexes that are displayed by antigen presenting cells (APC), a prerequisite for efficient T cell adaptive immunity against pathogens. Binding of alpha-beta TR to pMH complex initiates TR-CD3 clustering on the cell surface and intracellular activation of LCK that phosphorylates the ITAM motifs of CD3G, CD3D, CD3E and CD247 enabling the recruitment of ZAP70. In turn ZAP70 phosphorylates LAT, which recruits numerous signaling molecules to form the LAT signalosome. The LAT signalosome propagates signal branching to three major signaling pathways, the calcium, the mitogen-activated protein kinase (MAPK) kinase and the nuclear factor NF-kappa-B (NF-kB) pathways, leading to the mobilization of transcription factors that are critical for gene expression and essential for T cell growth and differentiation. The T cell repertoire is generated in the thymus, by V-(D)-J rearrangement. This repertoire is then shaped by intrathymic selection events to generate a peripheral T cell pool of self-MH restricted, non-autoaggressive T cells. Post-thymic interaction of alpha-beta TR with the pMH complexes shapes TR structural and functional avidity. The sequence is that of Probable non-functional T cell receptor beta variable 7-1 from Homo sapiens (Human).